An 88-amino-acid polypeptide reads, in one-letter code: Cell division topological specificity factor (88 aa).

This sequence belongs to the MinE family.

Prevents the cell division inhibition by proteins MinC and MinD at internal division sites while permitting inhibition at polar sites. This ensures cell division at the proper site by restricting the formation of a division septum at the midpoint of the long axis of the cell. This Salmonella agona (strain SL483) protein is Cell division topological specificity factor.